The primary structure comprises 398 residues: Beta-1,6-galactosyltransferase GALT29A (398 aa).

At 1–6 (MKRSVR) the chain is on the cytoplasmic side. The chain crosses the membrane as a helical; Signal-anchor for type II membrane protein span at residues 7-27 (PLFSALLFAFFAATLICRVAI). The Lumenal segment spans residues 28-398 (RRSSFSFASA…FKIPLVQVYH (371 aa)). 2 N-linked (GlcNAc...) asparagine glycosylation sites follow: N221 and N346.

It belongs to the glycosyltransferase 29 family. Interacts with GALT31A.

It is found in the golgi apparatus membrane. Galactosyltransferase involved in the biosynthesis of type II arabinogalactan. Possesses galactosyltransferase (GalT) activity in vitro, transferring galactose from UDP-galactose to a mixture of various oligosaccharides derived from arabinogalactan proteins. Forms a complex with GALT31A that can work cooperatively to enhance the activities of adding galactose residues at O6 positions to beta-1,6-galactan and beta-1,3-galactan. The polypeptide is Beta-1,6-galactosyltransferase GALT29A (Arabidopsis thaliana (Mouse-ear cress)).